A 149-amino-acid polypeptide reads, in one-letter code: uncharacterized protein (149 aa).

The region spanning 2-146 (LEVKTISVED…NHIVMYKTLR (145 aa)) is the N-acetyltransferase domain.

The protein belongs to the acetyltransferase family.

This is an uncharacterized protein from Bacillus subtilis (strain 168).